A 658-amino-acid chain; its full sequence is Scarecrow-like protein 28 (658 aa).

3 disordered regions span residues proline 43 to cysteine 85, leucine 96 to arginine 115, and proline 209 to arginine 265. A compositionally biased stretch (low complexity) spans glutamate 214–arginine 228. The 390-residue stretch at arginine 265–threonine 654 folds into the GRAS domain. A leucine repeat I (LRI) region spans residues phenylalanine 272 to histidine 336. The interval leucine 355–glycine 420 is VHIID. Residues valine 386 to aspartate 390 carry the VHIID motif. The segment at glutamate 430–methionine 462 is leucine repeat II (LRII). The tract at residues valine 471–asparagine 563 is PFYRE. Residues alanine 566–threonine 654 are SAW.

This sequence belongs to the GRAS family. Interacts with SNRNP35 and CYP95. As to expression, expressed in roots and sepals.

It localises to the nucleus. Probable transcription factor involved in plant development. This chain is Scarecrow-like protein 28 (SCL28), found in Arabidopsis thaliana (Mouse-ear cress).